Consider the following 669-residue polypeptide: DNA ligase (669 aa).

NAD(+) contacts are provided by residues 33-37 (DLTYD), 82-83 (SL), and Glu115. Residue Lys117 is the N6-AMP-lysine intermediate of the active site. NAD(+)-binding residues include Arg138, Glu172, Lys286, and Lys310. Residues Cys401, Cys404, Cys417, and Cys422 each contribute to the Zn(2+) site.

This sequence belongs to the NAD-dependent DNA ligase family. LigA subfamily. The cofactor is Mg(2+). Mn(2+) serves as cofactor.

The enzyme catalyses NAD(+) + (deoxyribonucleotide)n-3'-hydroxyl + 5'-phospho-(deoxyribonucleotide)m = (deoxyribonucleotide)n+m + AMP + beta-nicotinamide D-nucleotide.. In terms of biological role, DNA ligase that catalyzes the formation of phosphodiester linkages between 5'-phosphoryl and 3'-hydroxyl groups in double-stranded DNA using NAD as a coenzyme and as the energy source for the reaction. It is essential for DNA replication and repair of damaged DNA. The sequence is that of DNA ligase from Borrelia hermsii (strain HS1 / DAH).